A 333-amino-acid chain; its full sequence is Probable xyloglucan endotransglucosylase/hydrolase protein 27 (333 aa).

Positions 1 to 20 (METLSRLLVFMSLFSGLVSG) are cleaved as a signal peptide. In terms of domain architecture, GH16 spans 21 to 223 (FALQNLPITS…YKYAPYIARF (203 aa)). Glutamate 108 (nucleophile) is an active-site residue. Residue glutamate 112 is the Proton donor of the active site. Residues glutamate 112 and 125–127 (QTN) contribute to the xyloglucan site. N-linked (GlcNAc...) asparagine glycosylation occurs at asparagine 131. Xyloglucan-binding positions include 135–139 (HSGRE), 202–203 (KW), glycine 207, and arginine 282. A disulfide bridge links cysteine 277 with cysteine 290. The segment at 311 to 333 (IPRRHRNGKHRSKRSRVDGTESI) is disordered. Residues 312–324 (PRRHRNGKHRSKR) are compositionally biased toward basic residues.

Belongs to the glycosyl hydrolase 16 family. XTH group 3 subfamily. In terms of processing, contains at least one intrachain disulfide bond essential for its enzymatic activity. Expressed in 7 day old seedlings, roots, hypocotyls, rosette leaves, internodes between nodes bearing axillary shoots, nodes bearing flowers, flower buds, anthers and siliques.

It localises to the secreted. It is found in the cell wall. Its subcellular location is the extracellular space. The protein localises to the apoplast. It catalyses the reaction breaks a beta-(1-&gt;4) bond in the backbone of a xyloglucan and transfers the xyloglucanyl segment on to O-4 of the non-reducing terminal glucose residue of an acceptor, which can be a xyloglucan or an oligosaccharide of xyloglucan.. Its function is as follows. Catalyzes xyloglucan endohydrolysis (XEH) and/or endotransglycosylation (XET). Cleaves and religates xyloglucan polymers, an essential constituent of the primary cell wall, and thereby participates in cell wall construction of growing tissues. Required for cell wall modification during the development of tracheary elements. This is Probable xyloglucan endotransglucosylase/hydrolase protein 27 (XTH27) from Arabidopsis thaliana (Mouse-ear cress).